Consider the following 281-residue polypeptide: MENSEKTEVVLLACGSFNPITNMHLRLFELAKDYMNGTGKYKVIKGIISPVGDAYKKKGLISAYHRVIMAELATKNSKWVEVDTWESLQKEWTETAKVLRHHQEKLEASICDPQQNSPVLEKPGRKRKWAEQKQDISEKKSLEQTKTKGVPKVKLLCGADFLESFGVPNLWKSEDITKILGDYGLICITRAGNDAQKFIYESDVLWKHQNNIHLVNEWITNDISSTKIRRALRRGQSIRYLVPDLVEEYIEKHNLYSSESEERNVGVVLAPLQRNTTEVKA.

Residues Gly-15 and Ser-16 each contribute to the beta-nicotinamide D-ribonucleotide site. NAD(+)-binding residues include Gly-15, Ser-16, Phe-17, and Met-23. 15 to 17 (GSF) provides a ligand contact to ATP. Position 24 (His-24) interacts with ATP. Positions 55 and 57 each coordinate beta-nicotinamide D-ribonucleotide. Lys-57 is a binding site for NAD(+). ATP is bound at residue Lys-58. The beta-nicotinamide D-ribonucleotide site is built by Trp-92 and Thr-95. NAD(+)-binding residues include Trp-92 and Thr-95. Residues 113–143 (PQQNSPVLEKPGRKRKWAEQKQDISEKKSLE) are disordered. Ser-117 is subject to Phosphoserine. Positions 123-129 (PGRKRKW) match the Nuclear localization signal motif. Basic and acidic residues predominate over residues 129 to 143 (WAEQKQDISEKKSLE). Residues Gly-158, Asp-160, Leu-170, Trp-171, Glu-217, and Asn-221 each coordinate NAD(+). Position 158 to 160 (158 to 160 (GAD)) interacts with ATP. 2 residues coordinate beta-nicotinamide D-ribonucleotide: Leu-170 and Trp-171. Position 226 to 229 (226 to 229 (TKIR)) interacts with ATP.

This sequence belongs to the eukaryotic NMN adenylyltransferase family. As to quaternary structure, homohexamer. Interacts with ADPRT/PARP1. The cofactor is Zn(2+). Mg(2+) serves as cofactor.

The protein resides in the nucleus. The enzyme catalyses beta-nicotinamide D-ribonucleotide + ATP + H(+) = diphosphate + NAD(+). It catalyses the reaction nicotinate beta-D-ribonucleotide + ATP + H(+) = deamido-NAD(+) + diphosphate. It functions in the pathway cofactor biosynthesis; NAD(+) biosynthesis; NAD(+) from nicotinamide D-ribonucleotide: step 1/1. It participates in cofactor biosynthesis; NAD(+) biosynthesis; deamido-NAD(+) from nicotinate D-ribonucleotide: step 1/1. Its activity is regulated as follows. Activity is strongly inhibited by galotannin. Inhibited by P1-(adenosine-5')-P4-(nicotinic-acid-riboside-5')-tetraphosphate (Nap4AD). In terms of biological role, catalyzes the formation of NAD(+) from nicotinamide mononucleotide (NMN) and ATP. Can also use the deamidated form; nicotinic acid mononucleotide (NaMN) as substrate with the same efficiency. Can use triazofurin monophosphate (TrMP) as substrate. Also catalyzes the reverse reaction, i.e. the pyrophosphorolytic cleavage of NAD(+). For the pyrophosphorolytic activity, prefers NAD(+) and NaAD as substrates and degrades NADH, nicotinic acid adenine dinucleotide phosphate (NHD) and nicotinamide guanine dinucleotide (NGD) less effectively. Involved in the synthesis of ATP in the nucleus, together with PARP1, PARG and NUDT5. Nuclear ATP generation is required for extensive chromatin remodeling events that are energy-consuming. Fails to cleave phosphorylated dinucleotides NADP(+), NADPH and NaADP(+). Also acts as a cofactor for glutamate and aspartate ADP-ribosylation by directing PARP1 catalytic activity to glutamate and aspartate residues on histones. Protects against axonal degeneration following mechanical or toxic insults. Delays axonal degeneration after axotomy. Results in a &gt;10-fold increase in intact neurites 72 hours after injury. Neural protection does not correlate with cellular NAD(+) levels but may still require enzyme activity. In Bos taurus (Bovine), this protein is Nicotinamide/nicotinic acid mononucleotide adenylyltransferase 1 (NMNAT1).